Here is a 407-residue protein sequence, read N- to C-terminus: Imidazolonepropionase (407 aa).

Positions 68 and 70 each coordinate Fe(3+). Residues H68 and H70 each coordinate Zn(2+). 3 residues coordinate 4-imidazolone-5-propanoate: R77, Y140, and H173. Y140 contributes to the N-formimidoyl-L-glutamate binding site. Residue H238 participates in Fe(3+) binding. H238 contacts Zn(2+). Q241 contributes to the 4-imidazolone-5-propanoate binding site. D313 provides a ligand contact to Fe(3+). A Zn(2+)-binding site is contributed by D313. 2 residues coordinate N-formimidoyl-L-glutamate: N315 and G317. T318 is a binding site for 4-imidazolone-5-propanoate.

The protein belongs to the metallo-dependent hydrolases superfamily. HutI family. Zn(2+) is required as a cofactor. It depends on Fe(3+) as a cofactor.

It localises to the cytoplasm. The catalysed reaction is 4-imidazolone-5-propanoate + H2O = N-formimidoyl-L-glutamate. It functions in the pathway amino-acid degradation; L-histidine degradation into L-glutamate; N-formimidoyl-L-glutamate from L-histidine: step 3/3. Its function is as follows. Catalyzes the hydrolytic cleavage of the carbon-nitrogen bond in imidazolone-5-propanoate to yield N-formimidoyl-L-glutamate. It is the third step in the universal histidine degradation pathway. In Burkholderia ambifaria (strain ATCC BAA-244 / DSM 16087 / CCUG 44356 / LMG 19182 / AMMD) (Burkholderia cepacia (strain AMMD)), this protein is Imidazolonepropionase.